A 91-amino-acid chain; its full sequence is Small ribosomal subunit protein uS19 (91 aa).

The protein belongs to the universal ribosomal protein uS19 family.

In terms of biological role, protein S19 forms a complex with S13 that binds strongly to the 16S ribosomal RNA. In Pseudomonas syringae pv. syringae (strain B728a), this protein is Small ribosomal subunit protein uS19.